The sequence spans 189 residues: B3 domain-containing protein At2g32645 (189 aa).

The segment at residues 33–133 (FNQVKTPDFL…KLCFALTPKI (101 aa)) is a DNA-binding region (TF-B3).

The protein localises to the nucleus. The polypeptide is B3 domain-containing protein At2g32645 (Arabidopsis thaliana (Mouse-ear cress)).